The primary structure comprises 90 residues: Small ribosomal subunit protein bS16 (90 aa).

This sequence belongs to the bacterial ribosomal protein bS16 family.

This is Small ribosomal subunit protein bS16 from Streptococcus pneumoniae serotype 19F (strain G54).